The primary structure comprises 484 residues: Calcium-dependent protein kinase 26 (484 aa).

The Protein kinase domain occupies 24-282; sequence YSLGHKLGQG…AHQVLRHPWI (259 aa). ATP-binding positions include 30 to 38 and Lys53; that span reads LGQGQFGTT. Residue Asp148 is the Proton acceptor of the active site. Ser188 bears the Phosphoserine mark. Residues 288–318 form an autoinhibitory domain region; the sequence is APDRALDPAVLSRLKQFSAMNKLKQMALRVI. EF-hand domains are found at residues 325-360, 361-396, 397-432, and 436-466; these read EEIA…YGST, LKDT…LNKL, EREE…QGMS, and LEDV…GIVG. Ca(2+) contacts are provided by Asp338, Asp340, Ser342, Glu349, Asp374, Asp376, Ser378, Thr380, Glu385, Asp410, Asp412, Ser414, Tyr416, Glu421, Asp444, Asp446, Asp448, Arg450, and Glu455.

Belongs to the protein kinase superfamily. Ser/Thr protein kinase family. CDPK subfamily.

The enzyme catalyses L-seryl-[protein] + ATP = O-phospho-L-seryl-[protein] + ADP + H(+). The catalysed reaction is L-threonyl-[protein] + ATP = O-phospho-L-threonyl-[protein] + ADP + H(+). Activated by calcium. Autophosphorylation may play an important role in the regulation of the kinase activity. In terms of biological role, may play a role in signal transduction pathways that involve calcium as a second messenger. This chain is Calcium-dependent protein kinase 26 (CPK26), found in Arabidopsis thaliana (Mouse-ear cress).